A 193-amino-acid polypeptide reads, in one-letter code: Ion-translocating oxidoreductase complex subunit A (193 aa).

Helical transmembrane passes span 5 to 25, 39 to 59, 72 to 92, 102 to 122, 134 to 154, and 171 to 191; these read ILLI…FLGL, IGMG…AYLV, LRTL…EMVI, LLGI…VALL, VIYG…FAAL, and SIAL…SGLV.

Belongs to the NqrDE/RnfAE family. As to quaternary structure, the complex is composed of six subunits: RnfA, RnfB, RnfC, RnfD, RnfE and RnfG.

Its subcellular location is the cell inner membrane. Its function is as follows. Part of a membrane-bound complex that couples electron transfer with translocation of ions across the membrane. This chain is Ion-translocating oxidoreductase complex subunit A, found in Histophilus somni (strain 2336) (Haemophilus somnus).